A 383-amino-acid chain; its full sequence is Guanine nucleotide-binding protein G(s) subunit alpha (383 aa).

The disordered stretch occupies residues 1-31; sequence MGCFGSAGSKQSDSNSSEDTKSQKRRSDAIT. The N-palmitoyl glycine moiety is linked to residue G2. C3 carries S-palmitoyl cysteine lipidation. The segment covering 8-17 has biased composition (polar residues); sequence GSKQSDSNSS. A compositionally biased stretch (basic and acidic residues) spans 18–31; the sequence is EDTKSQKRRSDAIT. Residues 43-383 enclose the G-alpha domain; it reads ATHRLLLLGA…RMHLRQYELL (341 aa). Residues 46–59 form a G1 motif region; the sequence is RLLLLGAGESGKST. GTP contacts are provided by residues 51-58, 187-193, 212-216, 281-284, and A355; these read GAGESGKS, LRCRVLT, DVGGQ, and NKQD. Mg(2+) contacts are provided by S58 and T193. The G2 motif stretch occupies residues 185–193; sequence DILRCRVLT. The interval 208–217 is G3 motif; it reads FHMFDVGGQR. The G4 motif stretch occupies residues 277 to 284; it reads ILFLNKQD. Residues 353–358 are G5 motif; sequence TCAVDT.

It belongs to the G-alpha family. G(s) subfamily. As to quaternary structure, g proteins are composed of 3 units; alpha, beta and gamma. The alpha chain contains the guanine nucleotide binding site.

In terms of biological role, guanine nucleotide-binding proteins (G proteins) are involved as modulators or transducers in various transmembrane signaling systems. The G(s) protein is involved in hormonal regulation of adenylate cyclase: it activates the cyclase. Participates in olfactory signal transduction. The sequence is that of Guanine nucleotide-binding protein G(s) subunit alpha from Anopheles gambiae (African malaria mosquito).